A 580-amino-acid chain; its full sequence is Arginine--tRNA ligase (580 aa).

Residues 123–133 (PNLAKEMHVGH) carry the 'HIGH' region motif.

This sequence belongs to the class-I aminoacyl-tRNA synthetase family. In terms of assembly, monomer.

It is found in the cytoplasm. The catalysed reaction is tRNA(Arg) + L-arginine + ATP = L-arginyl-tRNA(Arg) + AMP + diphosphate. The polypeptide is Arginine--tRNA ligase (Pseudoalteromonas translucida (strain TAC 125)).